A 196-amino-acid polypeptide reads, in one-letter code: MAALNVLVSGCGRFLRGLLTGPTVTSWARPPARGFREVVEIQEGKTTIIEGRITGTPKESPNPPNPSGQCPICRWNLKHKYSYEDVLLLSQFIRPHGGMLPRSITGLCQEEHRKIEECVKMAHRAGLLPNHRPKLPEGFFPKTRPRLNRYLTRWSPRSVKPIYNKGHRWNKVRMAVGSPLLKDNVSYTGRPLVLYH.

The N-terminal 34 residues, 1–34, are a transit peptide targeting the mitochondrion; it reads MAALNVLVSGCGRFLRGLLTGPTVTSWARPPARG.

The protein belongs to the bacterial ribosomal protein bS18 family. Mitochondrion-specific ribosomal protein mL66 subfamily. In terms of assembly, component of the mitochondrial ribosome small subunit (28S) which comprises a 12S rRNA and about 30 distinct proteins.

It localises to the mitochondrion. The chain is Large ribosomal subunit protein mL66 (MRPS18A) from Bos taurus (Bovine).